The following is a 74-amino-acid chain: M-myrmeciitoxin-Mb1a (74 aa).

Positions 1–26 are cleaved as a signal peptide; sequence MKLSCLLLTLAIIVVLTIVHAPNVEA. Residues 27-50 constitute a propeptide that is removed on maturation; the sequence is KALADPESDAVGFADAVGEADPNA. Gln73 is subject to Glutamine amide.

Belongs to the formicidae venom precursor-01 superfamily. Ant pilosulin family. Expressed by the venom gland.

It is found in the secreted. Its function is as follows. Shows moderate activity against E.coli and S.aureus (MIC&lt;25 uM), slight activity against B.subtilis (MIC&lt;50 uM), and no activity against L.garvieae, P.aeruginosa, C.albicans, and S.cerevisiae. Has no hemolytic nor cytolytic activity. Causes an IgE-independent histamine release. This is M-myrmeciitoxin-Mb1a from Myrmecia banksi (Jack jumper ant).